Here is a 382-residue protein sequence, read N- to C-terminus: Anthranilate O-methyltransferase 1 (382 aa).

Tyrosine 20 lines the S-adenosyl-L-homocysteine pocket. Anthranilate is bound at residue glutamine 27. 6 residues coordinate S-adenosyl-L-homocysteine: cysteine 61, asparagine 66, aspartate 102, leucine 103, serine 146, and tyrosine 147. Tryptophan 168 is a binding site for anthranilate. Glutamate 268 and phenylalanine 270 together coordinate Mg(2+).

It belongs to the methyltransferase superfamily. Type-7 methyltransferase family. SABATH subfamily.

It catalyses the reaction anthranilate + S-adenosyl-L-methionine = O-methyl anthranilate + S-adenosyl-L-homocysteine. Methyltransferase involved in the biosynthesis of methyl anthranilate in response to stresses. Utilizes anthranilic acid as substrate, but not salicylic acid. Produces exclusively the O-methyl ester. The protein is Anthranilate O-methyltransferase 1 (AAMT1) of Zea mays (Maize).